Here is a 156-residue protein sequence, read N- to C-terminus: Transcription elongation factor GreA (156 aa).

Residues 46-73 adopt a coiled-coil conformation; it reads AEYHAAREKQSFIEGRIKELEALLSLAE.

It belongs to the GreA/GreB family.

Functionally, necessary for efficient RNA polymerase transcription elongation past template-encoded arresting sites. The arresting sites in DNA have the property of trapping a certain fraction of elongating RNA polymerases that pass through, resulting in locked ternary complexes. Cleavage of the nascent transcript by cleavage factors such as GreA or GreB allows the resumption of elongation from the new 3'terminus. GreA releases sequences of 2 to 3 nucleotides. The protein is Transcription elongation factor GreA of Cereibacter sphaeroides (strain ATCC 17025 / ATH 2.4.3) (Rhodobacter sphaeroides).